Here is a 209-residue protein sequence, read N- to C-terminus: Protein-L-isoaspartate O-methyltransferase (209 aa).

Ser55 is an active-site residue.

Belongs to the methyltransferase superfamily. L-isoaspartyl/D-aspartyl protein methyltransferase family.

The protein localises to the cytoplasm. It catalyses the reaction [protein]-L-isoaspartate + S-adenosyl-L-methionine = [protein]-L-isoaspartate alpha-methyl ester + S-adenosyl-L-homocysteine. Its function is as follows. Catalyzes the methyl esterification of L-isoaspartyl residues in peptides and proteins that result from spontaneous decomposition of normal L-aspartyl and L-asparaginyl residues. It plays a role in the repair and/or degradation of damaged proteins. This Anaeromyxobacter dehalogenans (strain 2CP-C) protein is Protein-L-isoaspartate O-methyltransferase.